Consider the following 28-residue polypeptide: Heat shock protein 81 (28 aa).

Residues Asn5 and Asp21 each coordinate ATP.

It belongs to the heat shock protein 90 family. Homodimer.

The protein localises to the cytoplasm. Putative molecular chaperone that may promote the maturation, structural maintenance and proper regulation of specific target proteins. The sequence is that of Heat shock protein 81 from Pseudotsuga menziesii (Douglas-fir).